Consider the following 296-residue polypeptide: Putative gluconeogenesis factor (296 aa).

Belongs to the gluconeogenesis factor family.

Its subcellular location is the cytoplasm. Required for morphogenesis under gluconeogenic growth conditions. This Vibrio cholerae serotype O1 (strain ATCC 39315 / El Tor Inaba N16961) protein is Putative gluconeogenesis factor.